A 117-amino-acid polypeptide reads, in one-letter code: Large ribosomal subunit protein bL20 (117 aa).

This sequence belongs to the bacterial ribosomal protein bL20 family.

In terms of biological role, binds directly to 23S ribosomal RNA and is necessary for the in vitro assembly process of the 50S ribosomal subunit. It is not involved in the protein synthesizing functions of that subunit. The polypeptide is Large ribosomal subunit protein bL20 (Rickettsia peacockii (strain Rustic)).